Reading from the N-terminus, the 68-residue chain is DNA-directed RNA polymerase subunit omega (68 aa).

It belongs to the RNA polymerase subunit omega family. In terms of assembly, the RNAP catalytic core consists of 2 alpha, 1 beta, 1 beta' and 1 omega subunit. When a sigma factor is associated with the core the holoenzyme is formed, which can initiate transcription.

It catalyses the reaction RNA(n) + a ribonucleoside 5'-triphosphate = RNA(n+1) + diphosphate. In terms of biological role, promotes RNA polymerase assembly. Latches the N- and C-terminal regions of the beta' subunit thereby facilitating its interaction with the beta and alpha subunits. The chain is DNA-directed RNA polymerase subunit omega from Dechloromonas aromatica (strain RCB).